Reading from the N-terminus, the 495-residue chain is Protein adenylyltransferase Fic (495 aa).

Positions 1 to 27 are disordered; sequence MGTEAEQPSPPSPPAQQQEQTNPPLWN. The chain crosses the membrane as a helical span at residues 36–55; the sequence is LYRLVLFFIAGSLAAWTIHA. TPR repeat units lie at residues 121-154 and 155-189; these read ALVS…APRH and PEVL…SPSN. An Inhibitory (S/T)XXXE(G/N) motif motif is present at residues 246–251; that stretch reads SVGIEG. Residues glutamate 250 and 331 to 334 each bind ATP; that span reads VGGH. The 136-residue stretch at 300 to 435 folds into the Fido domain; that stretch reads ITIKDILELH…IRPFVRFIAD (136 aa). Histidine 378 is an active-site residue. Residues 382 to 389, 414 to 415, and asparagine 422 contribute to the ATP site; these read DGNGRTSR and YY.

It belongs to the fic family. Homodimer.

It is found in the membrane. It catalyses the reaction L-tyrosyl-[protein] + ATP = O-(5'-adenylyl)-L-tyrosyl-[protein] + diphosphate. The catalysed reaction is L-threonyl-[protein] + ATP = 3-O-(5'-adenylyl)-L-threonyl-[protein] + diphosphate. It carries out the reaction 3-O-(5'-adenylyl)-L-threonyl-[protein] + H2O = L-threonyl-[protein] + AMP + H(+). The side chain of Glu-250 determines which of the two opposing activities (AMPylase or de-AMPylase) will take place. In response to endoplasmic reticulum stress, mediates de-AMPylase activity. Adenylyltransferase activity is inhibited by the inhibitory helix present at the N-terminus: Glu-250 binds ATP and competes with ATP-binding at Arg-389, thereby preventing adenylyltransferase activity. In unstressed cells, disengagement of Glu-250 promotes adenylyltransferase activity. Activation dissociates ATP-binding from Glu-250, allowing ordered binding of the entire ATP moiety with the alpha-phosphate in an orientation that is productive for accepting an incoming target hydroxyl side chain. Functionally, protein that can both mediate the addition of adenosine 5'-monophosphate (AMP) to specific residues of target proteins (AMPylation), and the removal of the same modification from target proteins (de-AMPylation), depending on the context. The side chain of Glu-250 determines which of the two opposing activities (AMPylase or de-AMPylase) will take place. Acts as a key regulator of the unfolded protein response (UPR) by mediating AMPylation or de-AMPylation of Hsc70-3/BiP. In unstressed cells, acts as an adenylyltransferase by mediating AMPylation of Hsc70-3/BiP at 'Thr-518', thereby inactivating it. In response to endoplasmic reticulum stress, acts as a phosphodiesterase by mediating removal of ATP (de-AMPylation) from Hsc70-3/BiP at 'Thr-518', leading to restore HSPA5/BiP activity. The polypeptide is Protein adenylyltransferase Fic (Drosophila yakuba (Fruit fly)).